The following is a 509-amino-acid chain: Pituitary homeobox homolog Ptx1 (509 aa).

Low complexity predominate over residues 70 to 98 (NGAGSAGSAESATTTSTALSSGSTGSSTV). Disordered regions lie at residues 70–125 (NGAG…SSVS), 148–171 (QDLV…PKHE), and 204–273 (LNNF…HFTS). Polar residues predominate over residues 227-242 (RSVNETTIKTENISSS). Basic and acidic residues predominate over residues 243 to 258 (GHDEPMTTSGEEPKND). A compositionally biased stretch (basic residues) spans 259–269 (KKNKRQRRQRT). The segment at residues 262–322 (KRQRRQRTHF…KNRRAKWRKR (61 aa)) is a DNA-binding region (homeobox). An OAR motif is present at residues 460 to 473 (SSIATLRLKAKQHA). The Nuclear localization signal signature appears at 464-470 (TLRLKAK).

This sequence belongs to the paired homeobox family. Bicoid subfamily.

The protein localises to the nucleus. Appears to control physiological cell functions rather than pattern formation during embryogenesis. The polypeptide is Pituitary homeobox homolog Ptx1 (Ptx1) (Drosophila melanogaster (Fruit fly)).